The chain runs to 2415 residues: Spectrin alpha chain, erythrocytic 1 (2415 aa).

9 Spectrin repeats span residues 52–152 (YHYQ…SDVL), 157–259 (KFYQ…ESLS), 263–365 (DLQR…AKLK), 370–471 (YHRF…HQYR), 475–576 (DFHL…RKLL), 580–681 (QLLQ…GTQL), 686–787 (QLLQ…KKKL), 792–894 (KLQQ…NDLK), and 898–967 (QLQQ…QQQQ). Residue S257 is modified to Phosphoserine. The SH3 domain occupies 975-1034 (GREARVIALYDFEARSRREVSMKKNDVLTLLSSINKDWWKVEADDHQGFVPAVYVRKLAP). S990 is modified (phosphoserine). Spectrin repeat units lie at residues 1085–1177 (LAYE…YQLL), 1183–1285 (VEMF…SLNE), 1287–1390 (HKFF…KMLD), 1394–1489 (ELQL…QLLT), 1499–1603 (DLKQ…KLNE), 1606–1709 (RQQR…KLKE), 1712–1815 (ALFQ…NLEE), 1818–1921 (EYLQ…SQLD), 1924–2029 (HAFQ…KLLE), 2040–2142 (LFME…QELQ), and 2154–2254 (MCQE…NLEQ). At S1972 the chain carries Phosphoserine. 3 EF-hand domains span residues 2267–2302 (ETLK…LNYY), 2310–2345 (EPEP…KESE), and 2347–2382 (IKTS…EQVS). Ca(2+)-binding residues include D2280, N2282, T2284, R2286, E2291, D2323, Y2329, and D2334.

This sequence belongs to the spectrin family. In terms of assembly, composed of non-homologous chains, alpha and beta, which aggregate to form dimers, tetramers, and higher polymers. Interacts with FASLG. Interacts with BCAM.

It localises to the cytoplasm. The protein resides in the cytoskeleton. The protein localises to the cell cortex. Its function is as follows. Spectrin is the major constituent of the cytoskeletal network underlying the erythrocyte plasma membrane. It associates with band 4.1 and actin to form the cytoskeletal superstructure of the erythrocyte plasma membrane. The sequence is that of Spectrin alpha chain, erythrocytic 1 (Spta1) from Mus musculus (Mouse).